The primary structure comprises 211 residues: Thymidylate kinase (211 aa).

10-17 lines the ATP pocket; the sequence is GGDGVGKS.

It belongs to the thymidylate kinase family.

The enzyme catalyses dTMP + ATP = dTDP + ADP. In terms of biological role, phosphorylation of dTMP to form dTDP in both de novo and salvage pathways of dTTP synthesis. The polypeptide is Thymidylate kinase (Clavibacter sepedonicus (Clavibacter michiganensis subsp. sepedonicus)).